The sequence spans 368 residues: Histidinol-phosphate aminotransferase 1 (368 aa).

Lys-224 carries the N6-(pyridoxal phosphate)lysine modification.

It belongs to the class-II pyridoxal-phosphate-dependent aminotransferase family. Histidinol-phosphate aminotransferase subfamily. As to quaternary structure, homodimer. Pyridoxal 5'-phosphate serves as cofactor.

The catalysed reaction is L-histidinol phosphate + 2-oxoglutarate = 3-(imidazol-4-yl)-2-oxopropyl phosphate + L-glutamate. Its pathway is amino-acid biosynthesis; L-histidine biosynthesis; L-histidine from 5-phospho-alpha-D-ribose 1-diphosphate: step 7/9. In Rhizobium meliloti (strain 1021) (Ensifer meliloti), this protein is Histidinol-phosphate aminotransferase 1 (hisC1).